A 1173-amino-acid polypeptide reads, in one-letter code: Paired amphipathic helix protein Sin3-like 6 (1173 aa).

The interval 40–75 (NQSAGESGRRLKMKRAREDVHTDTQKRKPEVSSRGE) is disordered. A compositionally biased stretch (basic and acidic residues) spans 55 to 75 (AREDVHTDTQKRKPEVSSRGE). PAH domains are found at residues 79 to 148 (LPRT…LPKG) and 162 to 232 (IRVD…LPNC). Disordered stretches follow at residues 236 to 337 (APST…TTKY), 655 to 697 (TASG…TAQP), and 740 to 813 (KHEL…ENNK). 2 stretches are compositionally biased toward basic and acidic residues: residues 264-276 (CKLE…SDQR) and 301-319 (RDYE…RTEK). Residues 320-337 (SAASGSQDIGNHKSTTKY) show a composition bias toward polar residues. Residues 750 to 765 (PTASREQSNFEVNGQN) show a composition bias toward polar residues. Positions 778–810 (RSNKDKQSCDKKGAKNKTRAEDDKQENCHKLSE) are enriched in basic and acidic residues.

It is found in the nucleus. Functionally, acts as a transcriptional repressor. Plays roles in regulating gene expression and genome stability. The polypeptide is Paired amphipathic helix protein Sin3-like 6 (SNL6) (Arabidopsis thaliana (Mouse-ear cress)).